The primary structure comprises 456 residues: Cytochrome P450 monooxygenase avaH (456 aa).

Residues 243–263 traverse the membrane as a helical segment; the sequence is LMSYFVSVFLVNVALFNAVSI. Residue Cys403 coordinates heme.

Belongs to the cytochrome P450 family. Heme is required as a cofactor.

It is found in the membrane. Its pathway is secondary metabolite biosynthesis. In terms of biological role, cytochrome P450 monooxygenase; part of the cluster that mediates the biosynthesis of a highly modified cyclo-arginine-tryptophan dipeptide (cRW). The first step of the pathway is perfornmed by the arginine-containing cyclodipeptide synthase (RCPDS) avaA that acts as the scaffold-generating enzyme and is responsible for formation of the cyclo-Arg-Trp (cRW) diketopiperazine. AvaB then acts as a multifunctional flavoenzyme that is responsible for generating the cyclo-Arg-formylkynurenine DKP, which can be deformylated by avaC. AvaB then further catalyzes an additional N-oxidation followed by cyclization and dehydration. The next step is an N-acetylation of the guanidine group catalyzed by the arginine N-acetyltransferase avaD. The roles of the additional enzymes identified within the ava cluster still have to be determined. This chain is Cytochrome P450 monooxygenase avaH, found in Aspergillus versicolor.